The chain runs to 386 residues: Formate-dependent phosphoribosylglycinamide formyltransferase (386 aa).

N(1)-(5-phospho-beta-D-ribosyl)glycinamide-binding positions include glutamate 15–leucine 16 and glutamate 75. ATP contacts are provided by residues arginine 107, lysine 148, serine 153 to glutamine 158, glutamate 188 to isoleucine 191, and glutamate 196. Residues alanine 112–valine 301 enclose the ATP-grasp domain. Residues glutamate 260 and glutamate 272 each coordinate Mg(2+). Residues aspartate 279, lysine 349, and arginine 356–arginine 357 each bind N(1)-(5-phospho-beta-D-ribosyl)glycinamide.

It belongs to the PurK/PurT family. As to quaternary structure, homodimer.

The catalysed reaction is N(1)-(5-phospho-beta-D-ribosyl)glycinamide + formate + ATP = N(2)-formyl-N(1)-(5-phospho-beta-D-ribosyl)glycinamide + ADP + phosphate + H(+). It functions in the pathway purine metabolism; IMP biosynthesis via de novo pathway; N(2)-formyl-N(1)-(5-phospho-D-ribosyl)glycinamide from N(1)-(5-phospho-D-ribosyl)glycinamide (formate route): step 1/1. In terms of biological role, involved in the de novo purine biosynthesis. Catalyzes the transfer of formate to 5-phospho-ribosyl-glycinamide (GAR), producing 5-phospho-ribosyl-N-formylglycinamide (FGAR). Formate is provided by PurU via hydrolysis of 10-formyl-tetrahydrofolate. In Francisella tularensis subsp. tularensis (strain WY96-3418), this protein is Formate-dependent phosphoribosylglycinamide formyltransferase.